The chain runs to 303 residues: Energy-coupling factor transporter ATP-binding protein EcfA2 (303 aa).

One can recognise an ABC transporter domain in the interval 17–260 (LSVSNLSCFF…EAFLAHTTII (244 aa)). 54–61 (GDSGSGKS) is a binding site for ATP.

This sequence belongs to the ABC transporter superfamily. Energy-coupling factor EcfA family. As to quaternary structure, forms a stable energy-coupling factor (ECF) transporter complex composed of 2 membrane-embedded substrate-binding proteins (S component), 2 ATP-binding proteins (A component) and 2 transmembrane proteins (T component).

The protein localises to the cell membrane. Functionally, ATP-binding (A) component of a common energy-coupling factor (ECF) ABC-transporter complex. Unlike classic ABC transporters this ECF transporter provides the energy necessary to transport a number of different substrates. The protein is Energy-coupling factor transporter ATP-binding protein EcfA2 of Mycoplasma pneumoniae (strain ATCC 29342 / M129 / Subtype 1) (Mycoplasmoides pneumoniae).